A 178-amino-acid chain; its full sequence is Cytochrome b6-f complex iron-sulfur subunit (178 aa).

A helical membrane pass occupies residues 20–42; the sequence is LLTFGTATGVALGALYPVANYFM. The Rieske domain maps to 65–161; the sequence is KTGWLATHQA…VDIEDDAVLV (97 aa). [2Fe-2S] cluster contacts are provided by Cys-107, His-109, Cys-125, and His-128. Cysteines 112 and 127 form a disulfide.

It belongs to the Rieske iron-sulfur protein family. In terms of assembly, the 4 large subunits of the cytochrome b6-f complex are cytochrome b6, subunit IV (17 kDa polypeptide, PetD), cytochrome f and the Rieske protein, while the 4 small subunits are PetG, PetL, PetM and PetN. The complex functions as a dimer. The cofactor is [2Fe-2S] cluster.

It localises to the cellular thylakoid membrane. It catalyses the reaction 2 oxidized [plastocyanin] + a plastoquinol + 2 H(+)(in) = 2 reduced [plastocyanin] + a plastoquinone + 4 H(+)(out). In terms of biological role, component of the cytochrome b6-f complex, which mediates electron transfer between photosystem II (PSII) and photosystem I (PSI), cyclic electron flow around PSI, and state transitions. The polypeptide is Cytochrome b6-f complex iron-sulfur subunit (Prochlorococcus marinus (strain AS9601)).